The primary structure comprises 2178 residues: Toxin A (2178 aa).

Residues 1–93 (MLITREQLMK…RELIKNSRTS (93 aa)) form a four-helical bundle region. The GT44 domain occupies 98–474 (KNLSFIWIGG…KPEVNSTVFF (377 aa)). Residues 98-474 (KNLSFIWIGG…KPEVNSTVFF (377 aa)) form a glucosyltransferase region region. The interval 98–474 (KNLSFIWIGG…KPEVNSTVFF (377 aa)) is N-acetylglucosaminyltransferase region. UDP-N-acetyl-alpha-D-glucosamine is bound by residues 103 to 105 (IWI), Asn-141, 267 to 271 (SDILR), and 284 to 286 (DLD). 3 residues coordinate Mg(2+): Asp-284, Asp-286, and Glu-520. 523–525 (SSW) contacts UDP-N-acetyl-alpha-D-glucosamine. The tract at residues 549–806 (NYEDGLNFNK…RVEQLNKVAE (258 aa)) is autoprocessing region. 1D-myo-inositol hexakisphosphate contacts are provided by Asn-557, Lys-607, and Lys-651. The 214-residue stretch at 574–787 (VNSTKIYENY…QISNKYVVYW (214 aa)) folds into the Peptidase C80 domain. The active-site For protease activity is the His-657. The active-site Nucleophile; for protease activity is Cys-707. 1D-myo-inositol hexakisphosphate is bound by residues 758–759 (KR) and Lys-782. Residues 807 to 1485 (FAKDINSIIQ…VYMEGKIFLN (679 aa)) are translocation region. Cell wall-binding repeat units follow at residues 1799–1818 (EYGW…INLI), 1820–1839 (KKGY…NTGV), 1870–1889 (YTGW…NSKA), 1890–1909 (VTGL…NGQM), 1910–1929 (QIKW…NTGE), 1931–1950 (IIGW…EGRL), 1951–1970 (LTGY…NING), 2004–2023 (YKGW…DSIA), 2024–2043 (VTGS…KTAV), 2045–2060 (TNGW…YVSN), 2064–2083 (VLGY…STGI), 2114–2133 (YTGW…YNSA), 2134–2153 (VTGW…KTGA), and 2155–2174 (TTGL…KGEQ).

This sequence belongs to the clostridial glucosylating toxin (LCGT) family. Mn(2+) serves as cofactor. The cofactor is Mg(2+). Post-translationally, undergoes autocatalytic cleavage to release the N-terminal part (N-acetylglucosaminyltransferase TcdA), which constitutes the active part of the toxin, in the host cytosol. 1D-myo-inositol hexakisphosphate-binding (InsP6) activates the peptidase C80 domain and promotes autoprocessing.

The protein localises to the secreted. It is found in the host endosome membrane. It localises to the host cytoplasm. The protein resides in the host cytosol. Its subcellular location is the host cell membrane. It catalyses the reaction L-threonyl-[protein] + UDP-N-acetyl-alpha-D-glucosamine = 3-O-(N-acetyl-alpha-D-glucosaminyl)-L-threonyl-[protein] + UDP + H(+). Protease activity is activated upon binding to 1D-myo-inositol hexakisphosphate (InsP6), which induces conformational reorganization. Its function is as follows. Precursor of a cytotoxin, which enters into host cells and mediates autoprocessing to release the active toxin (N-acetylglucosaminyltransferase TcdA) into the host cytosol. Once entered into host cells, acidification in the endosome promotes the membrane insertion of the translocation region and formation of a pore, leading to translocation of the GT44 and peptidase C80 domains across the endosomal membrane. This activates the peptidase C80 domain and autocatalytic processing, releasing the N-terminal part (N-acetylglucosaminyltransferase TcdA), which constitutes the active part of the toxin, in the cytosol. Functionally, active form of the toxin, which is released into the host cytosol following autoprocessing and inactivates small GTPases. Acts by mediating monoglycosylation of small GTPases of the Rho family (Rac1, RhoA, RhoG and Cdc42) in host cells at the conserved threonine residue located in the switch I region ('Thr-37/35'), using UDP-N-acetyl-alpha-D-glucosamine as the sugar donor. Monoglycosylation of host small GTPases completely prevents the recognition of the downstream effector, blocking the GTPases in their inactive form, leading to actin cytoskeleton disruption and cell death. This is Toxin A (tcdA) from Clostridium novyi.